The sequence spans 324 residues: Large ribosomal subunit protein uL3m (324 aa).

The N-terminal 41 residues, 1-41, are a transit peptide targeting the mitochondrion; that stretch reads MAAVPRGLLSRINQFLSIRSITPSSSESLPHCSSFFLIRRF. The segment at 206–229 is disordered; the sequence is PASHGASLSHRSGGSTGQRDAPGK.

This sequence belongs to the universal ribosomal protein uL3 family. Part of the 50S ribosomal subunit.

The protein resides in the mitochondrion. Functionally, one of the primary rRNA binding proteins, it binds directly near the 3'-end of the 23S rRNA, where it nucleates assembly of the 50S subunit. The chain is Large ribosomal subunit protein uL3m from Arabidopsis thaliana (Mouse-ear cress).